The sequence spans 444 residues: Cadaverine/lysine antiporter (444 aa).

Transmembrane regions (helical) follow at residues 7–27 (IGLF…GIAL), 35–55 (IGGI…SLAY), 95–115 (IGNL…FPVL), 123–143 (IACI…GTWV), 149–169 (IGLV…WHWF), 193–213 (ILLC…TGMV), 222–242 (LATM…TQVL), 273–293 (LVSA…MMLV), 323–343 (LLLA…MNSA), 354–374 (LTGI…VDLI), 384–404 (FVSL…LMGA), and 405–425 (SSFE…FYAR).

The protein belongs to the amino acid-polyamine-organocation (APC) superfamily. Basic amino acid/polyamine antiporter (APA) (TC 2.A.3.2) family.

The protein localises to the cell inner membrane. The catalysed reaction is cadaverine(in) + L-lysine(out) = cadaverine(out) + L-lysine(in). Under acidic conditions, in the presence of lysine, functions as a cadaverine:lysine antiporter that facilitates the excretion of cadaverine and the uptake of lysine. This Escherichia coli O157:H7 protein is Cadaverine/lysine antiporter (cadB).